The primary structure comprises 369 residues: Transmembrane protein 198 (369 aa).

A run of 7 helical transmembrane segments spans residues 37-57 (VVPSVVCSMCCLFGIIYCFFG), 60-80 (CFKAVLFLTGLMFGSVIIFLL), 93-113 (VEASVGIGLGIGTLCGLVTML), 117-137 (VGLFMVGLLLGLLVGIGTLIG), 148-168 (SVWVPLGVLLGLGMLFAVLTL), 181-201 (VFGAAVIVVATDYFVELFALV), and 216-236 (VCWTTWVVLGAWPALALLGVL). Positions 266–308 (RQKEERRESSRKKKRKQPQSAQHTHAAKALHPEPAYRRKPNPI) are disordered.

This sequence belongs to the TMEM198 family.

The protein localises to the membrane. The sequence is that of Transmembrane protein 198 (tmem198ab) from Danio rerio (Zebrafish).